The chain runs to 187 residues: Adenine phosphoribosyltransferase (187 aa).

Belongs to the purine/pyrimidine phosphoribosyltransferase family. In terms of assembly, homodimer.

It is found in the cytoplasm. It carries out the reaction AMP + diphosphate = 5-phospho-alpha-D-ribose 1-diphosphate + adenine. Its pathway is purine metabolism; AMP biosynthesis via salvage pathway; AMP from adenine: step 1/1. Catalyzes a salvage reaction resulting in the formation of AMP, that is energically less costly than de novo synthesis. This is Adenine phosphoribosyltransferase from Burkholderia pseudomallei (strain 1106a).